Consider the following 468-residue polypeptide: Plant UBX domain-containing protein 7 (468 aa).

Position 1 is an N-acetylmethionine (Met-1). The region spanning 7-48 (SGDQQRLVSSFLEIAVGQTAETARQFLQATSWKLEEAIQLFY) is the UBA-like domain. Disordered stretches follow at residues 138 to 168 (KSPG…SAPR) and 299 to 329 (HFAS…KDEE). The segment covering 150-166 (SSASASASASASESASA) has biased composition (low complexity). The region spanning 328–347 (EEEEELQRALAASLEDNNMK) is the UIM domain. Residues 385–466 (DRSLQCRVGI…GVANSMISAT (82 aa)) form the UBX domain.

Interacts with CDC48A via its UBX domain and with ubiquitin via its N-terminal UBA-like domain. In terms of tissue distribution, expressed broadly in sporophyte and gametophyte cells.

Its subcellular location is the nucleus. Acts as a bridge between CDC48A and ubiquitin, suggesting a role in targeted protein degradation. In Arabidopsis thaliana (Mouse-ear cress), this protein is Plant UBX domain-containing protein 7.